The following is a 511-amino-acid chain: MATVQEKAAALNLSALHSPAHRPPGFSVAQKPFGATYVWSSIINTLQTQVEVKKRRHRLKRHNDCFVGSEAVDVIFSHLIQNKYFGDVDIPRAKVVRVCQALMDYKVFEAVPTKVFGKDKKPTFEDSSCSLYRFTTIPNQDSQLGKENKLYSPARYADALFKSSDIRSASLEDLWENLSLKPANSPHVNISATLSPQVINEVWQEETIGRLLQLVDLPLLDSLLKQQEAVPKIPQPKRQSTMVNSSNYLDRGILKAYSDSQEDEWLSAAIDCLEYLPDQMVVEISRSFPEQPDRTDLVKELLFDAIGRYYSSREPLLNHLSDVHNGIAELLVNGKTEIALEATQLLLKLLDFQNREEFRRLLYFMAVAANPSEFKLQKESDNRMVVKRIFSKAIVDNKNLSKGKTDLLVLFLMDHQKDVFKIPGTLHKIVSVKLMAIQNGRDPNRDAGYIYCQRIDQRDYSNNTEKTTKDELLNLLKTLDEDSKLSAKEKKKLLGQFYKCHPDIFIEHFGD.

The DEP domain occupies 46–136; it reads LQTQVEVKKR…SSCSLYRFTT (91 aa).

This sequence belongs to the DEPDC7 family. As to expression, expressed in liver.

The sequence is that of DEP domain-containing protein 7 (DEPDC7) from Homo sapiens (Human).